The primary structure comprises 340 residues: Ketol-acid reductoisomerase (NADP(+)) (340 aa).

A KARI N-terminal Rossmann domain is found at 1 to 183 (MAITVYYDKD…GGGRTGIIET (183 aa)). Residues 26-29 (FGSQ), Ser54, and 84-87 (DEFQ) each bind NADP(+). His109 is an active-site residue. Gly135 is a binding site for NADP(+). One can recognise a KARI C-terminal knotted domain in the interval 184-329 (TFKAETETDL…EKLRGMMPWI (146 aa)). Positions 192, 196, 228, and 232 each coordinate Mg(2+). Ser253 contributes to the substrate binding site.

This sequence belongs to the ketol-acid reductoisomerase family. Requires Mg(2+) as cofactor.

It carries out the reaction (2R)-2,3-dihydroxy-3-methylbutanoate + NADP(+) = (2S)-2-acetolactate + NADPH + H(+). It catalyses the reaction (2R,3R)-2,3-dihydroxy-3-methylpentanoate + NADP(+) = (S)-2-ethyl-2-hydroxy-3-oxobutanoate + NADPH + H(+). The protein operates within amino-acid biosynthesis; L-isoleucine biosynthesis; L-isoleucine from 2-oxobutanoate: step 2/4. It participates in amino-acid biosynthesis; L-valine biosynthesis; L-valine from pyruvate: step 2/4. Its function is as follows. Involved in the biosynthesis of branched-chain amino acids (BCAA). Catalyzes an alkyl-migration followed by a ketol-acid reduction of (S)-2-acetolactate (S2AL) to yield (R)-2,3-dihydroxy-isovalerate. In the isomerase reaction, S2AL is rearranged via a Mg-dependent methyl migration to produce 3-hydroxy-3-methyl-2-ketobutyrate (HMKB). In the reductase reaction, this 2-ketoacid undergoes a metal-dependent reduction by NADPH to yield (R)-2,3-dihydroxy-isovalerate. In Campylobacter fetus subsp. fetus (strain 82-40), this protein is Ketol-acid reductoisomerase (NADP(+)).